Consider the following 326-residue polypeptide: Type II methyltransferase M.CviAII (326 aa).

Belongs to the N(4)/N(6)-methyltransferase family.

The catalysed reaction is a 2'-deoxyadenosine in DNA + S-adenosyl-L-methionine = an N(6)-methyl-2'-deoxyadenosine in DNA + S-adenosyl-L-homocysteine + H(+). An alpha subtype methylase that recognizes the double-stranded sequence 5'-CATG-3', methylates A-2 on both strands and protects the DNA from cleavage by the CviAII endonuclease. This is Type II methyltransferase M.CviAII (CVIAIIM) from Paramecium bursaria Chlorella virus 1 (PBCV-1).